The primary structure comprises 305 residues: Succinate--CoA ligase [ADP-forming] subunit alpha (305 aa).

CoA-binding positions include 17-20, Lys-43, and 96-98; these read TGKE and ITE. Tyr-161 lines the substrate pocket. Residue His-249 is the Tele-phosphohistidine intermediate of the active site.

Belongs to the succinate/malate CoA ligase alpha subunit family. As to quaternary structure, heterotetramer of two alpha and two beta subunits.

The catalysed reaction is succinate + ATP + CoA = succinyl-CoA + ADP + phosphate. It carries out the reaction GTP + succinate + CoA = succinyl-CoA + GDP + phosphate. Its pathway is carbohydrate metabolism; tricarboxylic acid cycle; succinate from succinyl-CoA (ligase route): step 1/1. Its function is as follows. Succinyl-CoA synthetase functions in the citric acid cycle (TCA), coupling the hydrolysis of succinyl-CoA to the synthesis of either ATP or GTP and thus represents the only step of substrate-level phosphorylation in the TCA. The alpha subunit of the enzyme binds the substrates coenzyme A and phosphate, while succinate binding and nucleotide specificity is provided by the beta subunit. The chain is Succinate--CoA ligase [ADP-forming] subunit alpha from Aquifex aeolicus (strain VF5).